The following is a 253-amino-acid chain: Ras-like protein family member 11A-like (253 aa).

GTP is bound by residues 43 to 50 (GASNVGKT), 90 to 97 (DTPCVSLQ), and 157 to 160 (NKSD). The tract at residues 213–233 (GNGEKRKGGLHLARPKSPNMQ) is disordered.

This sequence belongs to the small GTPase superfamily. Ras family.

The protein resides in the nucleus. Its subcellular location is the nucleolus. It catalyses the reaction GTP + H2O = GDP + phosphate + H(+). Functionally, regulator of rDNA transcription. The protein is Ras-like protein family member 11A-like of Danio rerio (Zebrafish).